Consider the following 452-residue polypeptide: Bifunctional protein GlmU (452 aa).

Residues Met-1–Lys-232 form a pyrophosphorylase region. Residues Leu-11–Gly-14, Lys-25, Gln-78, and Gly-83–Thr-84 each bind UDP-N-acetyl-alpha-D-glucosamine. Residue Asp-108 coordinates Mg(2+). Residues Gly-144, Glu-158, Asn-173, and Asn-230 each contribute to the UDP-N-acetyl-alpha-D-glucosamine site. Asn-230 lines the Mg(2+) pocket. Residues Ala-233–Ala-253 form a linker region. Residues Gly-254–Gly-452 are N-acetyltransferase. Residues Arg-319 and Lys-337 each contribute to the UDP-N-acetyl-alpha-D-glucosamine site. His-349 (proton acceptor) is an active-site residue. Positions 352 and 363 each coordinate UDP-N-acetyl-alpha-D-glucosamine. Residues Ala-366, Asn-372–Tyr-373, Ser-391, Ser-409, and Arg-426 each bind acetyl-CoA.

It in the N-terminal section; belongs to the N-acetylglucosamine-1-phosphate uridyltransferase family. This sequence in the C-terminal section; belongs to the transferase hexapeptide repeat family. Homotrimer. Mg(2+) serves as cofactor.

The protein localises to the cytoplasm. It carries out the reaction alpha-D-glucosamine 1-phosphate + acetyl-CoA = N-acetyl-alpha-D-glucosamine 1-phosphate + CoA + H(+). The catalysed reaction is N-acetyl-alpha-D-glucosamine 1-phosphate + UTP + H(+) = UDP-N-acetyl-alpha-D-glucosamine + diphosphate. Its pathway is nucleotide-sugar biosynthesis; UDP-N-acetyl-alpha-D-glucosamine biosynthesis; N-acetyl-alpha-D-glucosamine 1-phosphate from alpha-D-glucosamine 6-phosphate (route II): step 2/2. It functions in the pathway nucleotide-sugar biosynthesis; UDP-N-acetyl-alpha-D-glucosamine biosynthesis; UDP-N-acetyl-alpha-D-glucosamine from N-acetyl-alpha-D-glucosamine 1-phosphate: step 1/1. The protein operates within bacterial outer membrane biogenesis; LPS lipid A biosynthesis. Functionally, catalyzes the last two sequential reactions in the de novo biosynthetic pathway for UDP-N-acetylglucosamine (UDP-GlcNAc). The C-terminal domain catalyzes the transfer of acetyl group from acetyl coenzyme A to glucosamine-1-phosphate (GlcN-1-P) to produce N-acetylglucosamine-1-phosphate (GlcNAc-1-P), which is converted into UDP-GlcNAc by the transfer of uridine 5-monophosphate (from uridine 5-triphosphate), a reaction catalyzed by the N-terminal domain. This chain is Bifunctional protein GlmU, found in Nitrobacter hamburgensis (strain DSM 10229 / NCIMB 13809 / X14).